The sequence spans 144 residues: Transcriptional regulator SlyA (144 aa).

Residues 2–135 enclose the HTH marR-type domain; the sequence is ESPLGSDLSR…LSQMISKLEK (134 aa). The H-T-H motif DNA-binding region spans 49–72; sequence QIQLAKAIGIEQPSLVRTLDQLEE.

This sequence belongs to the SlyA family. Homodimer.

Functionally, transcription regulator that can specifically activate or repress expression of target genes. The protein is Transcriptional regulator SlyA of Wigglesworthia glossinidia brevipalpis.